Consider the following 541-residue polypeptide: MPRRKQSHPQPVKCEGVKVDTEDSFDEGPGALVLESDLLLGQDLEFEEEEEEDEGDGHNDQLMGFERDSEGDSQGARPGLPYGLSDDESGGGRALSAESEVEEPARGPGEARGERPGPACQLCGGPTGEGPCCGAGGPGGGPPLPPRLLYSCRLCAFVSHYSSHLKRHMQTHSGEKPFRCGRCPYASAQLVNLTRHTRTHTGEKPYRCPHCPFACSSLGNLRRHQRTHTGPPTPPCPTCGFRCCAPRPTRPPSPTEQEGTMPRRSEDALILPDLSLHVPPGGASFLPDCGQLRGEGESLCGTGSEPLPELLFPWTCRGCGQELEEGEGSRLGAAMCGRCMRGEAGGVATGGPQGPGDKGFACSLCPFATHYPNHLARHMKTHSGEKPFRCARCPYASAHLDNLKRHQRVHTGEKPYKCPLCPYACGNLANLKRHGRIHSGDKPFRCSLCNYSCNQSMNLKRHMLRHTGEKPFRCATCAYTTGHWDNYKRHQKVHGHGGAGGPGLSAPEGWAPPHSPPSVLSTRGPAALGATGSRALHSDSP.

The interval 1-118 (MPRRKQSHPQ…GEARGERPGP (118 aa)) is disordered. The segment covering 44-55 (LEFEEEEEEDEG) has biased composition (acidic residues). Residues serine 85 and serine 96 each carry the phosphoserine modification. Basic and acidic residues predominate over residues 103–115 (EPARGPGEARGER). 8 consecutive C2H2-type zinc fingers follow at residues 150-172 (YSCRLCAFVSHYSSHLKRHMQTH), 178-200 (FRCGRCPYASAQLVNLTRHTRTH), 206-228 (YRCPHCPFACSSLGNLRRHQRTH), 360-382 (FACSLCPFATHYPNHLARHMKTH), 388-410 (FRCARCPYASAHLDNLKRHQRVH), 416-438 (YKCPLCPYACGNLANLKRHGRIH), 444-466 (FRCSLCNYSCNQSMNLKRHMLRH), and 472-494 (FRCATCAYTTGHWDNYKRHQKVH). The interval 492–541 (KVHGHGGAGGPGLSAPEGWAPPHSPPSVLSTRGPAALGATGSRALHSDSP) is disordered.

The protein belongs to the krueppel C2H2-type zinc-finger protein family. In terms of assembly, binds DNA. Can associate with the proximal promoter regions of PAX6 and SP4, and their known targets including ARR3, RHO, OPN1MW2 and OPN1SW. Widely expressed. In the eye, expression is greatest in the retina and least in the lens and cornea.

The protein resides in the nucleus. Functionally, transcriptional regulator that plays a role in retinal development and maintenance. The chain is Zinc finger protein 513 (Znf513) from Mus musculus (Mouse).